Here is a 291-residue protein sequence, read N- to C-terminus: 4-hydroxy-tetrahydrodipicolinate synthase (291 aa).

T47 lines the pyruvate pocket. Y134 acts as the Proton donor/acceptor in catalysis. K162 acts as the Schiff-base intermediate with substrate in catalysis. I205 contributes to the pyruvate binding site.

The protein belongs to the DapA family. In terms of assembly, homotetramer; dimer of dimers.

The protein localises to the cytoplasm. The enzyme catalyses L-aspartate 4-semialdehyde + pyruvate = (2S,4S)-4-hydroxy-2,3,4,5-tetrahydrodipicolinate + H2O + H(+). It participates in amino-acid biosynthesis; L-lysine biosynthesis via DAP pathway; (S)-tetrahydrodipicolinate from L-aspartate: step 3/4. Functionally, catalyzes the condensation of (S)-aspartate-beta-semialdehyde [(S)-ASA] and pyruvate to 4-hydroxy-tetrahydrodipicolinate (HTPA). This is 4-hydroxy-tetrahydrodipicolinate synthase from Methanosphaerula palustris (strain ATCC BAA-1556 / DSM 19958 / E1-9c).